The following is a 218-amino-acid chain: Esterase FPY3 (218 aa).

Residues Ser-95, Asp-163, and His-190 each act as charge relay system in the active site.

This sequence belongs to the LovG family.

It participates in secondary metabolite biosynthesis. In terms of biological role, esterase; part of the gene cluster that mediates the biosynthesis of the gamma-pyrones fusapyrone (FPY) and deoxyfusapyrone (dFPY). FPY is an undecaketide and thus likely synthesized by the polyketide synthase FPY1 from acetyl-CoA functioning as starter unit and the addition of 10 malonyl-CoA extender units by successive Claisen-condensations. Next to this, FPY shares some rare features: C-glycosylated 4-deoxyglucose at C-3, a gem-dimethyl group at C-13, and an alpha-beta to beta-gamma double bond shift at C-20. During FPY biosynthesis mono-C-methyl groups are transferred to the tetra-, penta-, hexa- and heptaketide, while two C-methyl groups are transferred to the nonaketide, suggesting that the CMet domain is programmed to selectively catalyze two successive C-alpha-methylation reactions of the nonaketide, while other alpha-carbons are non- or mono-methylated only. While the origin of the 4'-deoxyglucose moiety remains opaque, its transfer to C-3 is most likely mediated by the C-glycosyltransferase FPY2. Next to this, the hydroxyl group present at C-33 and discriminating between FPY and dFPY, is likely to be installed by the cytochrome P450 monooxygenase FPY7. No putative function can be predicted for the remaining genes FPY3-FPY6. This Fusarium mangiferae (Mango malformation disease fungus) protein is Esterase FPY3.